The chain runs to 359 residues: Histidinol-phosphate aminotransferase 1 (359 aa).

K216 carries the N6-(pyridoxal phosphate)lysine modification.

Belongs to the class-II pyridoxal-phosphate-dependent aminotransferase family. Histidinol-phosphate aminotransferase subfamily. As to quaternary structure, homodimer. Pyridoxal 5'-phosphate serves as cofactor.

It catalyses the reaction L-histidinol phosphate + 2-oxoglutarate = 3-(imidazol-4-yl)-2-oxopropyl phosphate + L-glutamate. Its pathway is amino-acid biosynthesis; L-histidine biosynthesis; L-histidine from 5-phospho-alpha-D-ribose 1-diphosphate: step 7/9. This chain is Histidinol-phosphate aminotransferase 1 (hisC1), found in Caulobacter vibrioides (strain ATCC 19089 / CIP 103742 / CB 15) (Caulobacter crescentus).